A 993-amino-acid chain; its full sequence is MASAAVESFVTKQLDLLELERDAEVEERRSWQENISLKELQSRGVCLLKLQVSSQRTGLYGRLLVTFEPRRYGSAAALPSNSFTSGDIVGLYDAANEGSQLATGILTRVTQKSVTVAFDESHDFQLSLDRENSYRLLKLANDVTYRRLKKALIALKKYHSGPASSLIEVLFGRSAPSPASEIHPLTFFNTCLDTSQKEAVLFALSQKELAIIHGPPGTGKTTTVVEIILQAVKQGLKVLCCAPSNIAVDNLVERLALCKQRILRLGHPARLLESIQQHSLDAVLARSDSAQIVADIRKDIDQVFVKNKKTQDKREKSNFRNEIKLLRKELKEREEAAMLESLTSANVVLATNTGASADGPLKLLPESYFDVVVIDECAQALEASCWIPLLKARKCILAGDHKQLPPTTVSHKAALAGLSLSLMERLAEEYGARVVRTLTVQYRMHQAIMRWASDTMYLGQLTAHSSVARHLLRDLPGVAATEETGVPLLLVDTAGCGLFELEEEDEQSKGNPGEVRLVSLHIQALVDAGVPARDIAVVSPYNLQVDLLRQSLVHRHPELEIKSVDGFQGREKEAVILSFVRSNRKGEVGFLAEDRRINVAVTRARRHVAVICDSRTVNNHAFLKTLVEYFTQHGEVRTAFEYLDDIVPENYSHENSQGSSHAATKPQGPATSTRTGSQRQEGGQEAAAPARQGRKKPAGKSLASEAPSQPSLNGGSPEGVESQDGVDHFRAMIVEFMASKKMQLEFPPSLNSHDRLRVHQIAEEHGLRHDSSGEGKRRFITVSKRAPRPRAALGPPAGTGGPAPLQPVPPTPAQTEQPPREQRGPDQPDLRTLHLERLQRVRSAQGQPASKEQQASGQQKLPEKKKKKAKGHPATDLPTEEDFEALVSAAVKADNTCGFAKCTAGVTTLGQFCQLCSRRYCLSHHLPEIHGCGERARAHARQRISREGVLYAGSGTKNGSLDPAKRAQLQRRLDKKLSELSNQRTSRRKERGT.

Position 2 is an N-acetylalanine (A2). ATP-binding positions include 214-221 (GPPGTGKT), Q403, Y442, and E571. Positions 638–785 (TAFEYLDDIV…KRRFITVSKR (148 aa)) are SS DNA-binding. Disordered regions lie at residues 651–723 (YSHE…VESQ), 782–828 (VSKR…PDQP), and 841–879 (VRSA…DLPT). Composition is skewed to polar residues over residues 653–662 (HENSQGSSHA) and 669–681 (PATS…QRQE). The R3H domain occupies 723–786 (QDGVDHFRAM…RRFITVSKRA (64 aa)). Residues 818–828 (PPREQRGPDQP) are compositionally biased toward basic and acidic residues. Over residues 842-859 (RSAQGQPASKEQQASGQQ) the composition is skewed to polar residues. The Nuclear localization signal signature appears at 864–868 (KKKKK). The segment at 891–940 (VKADNTCGFAKCTAGVTTLGQFCQLCSRRYCLSHHLPEIHGCGERARAHA) adopts an AN1-type zinc-finger fold. Positions 897, 902, 913, 916, 921, 924, 930, and 932 each coordinate Zn(2+). Positions 971–993 (RRLDKKLSELSNQRTSRRKERGT) are disordered.

The protein belongs to the DNA2/NAM7 helicase family. As to quaternary structure, homooligomer. Interacts with RUVBL1. Interacts with RUVBL2. Interacts with GTF3C1. Interacts with ABT1. Interacts with ribosomes. As to expression, expressed in all tissues examined. Expressed in the developing and adult human brain, with highest expression in the cerebellum. Moderately expressed in fibroblasts.

It localises to the nucleus. It is found in the cytoplasm. The protein resides in the cell projection. The protein localises to the axon. It carries out the reaction ATP + H2O = ADP + phosphate + H(+). In terms of biological role, 5' to 3' helicase that unwinds RNA and DNA duplexes in an ATP-dependent reaction. Specific to 5'-phosphorylated single-stranded guanine-rich sequences. May play a role in RNA metabolism, ribosome biogenesis or initiation of translation. May play a role in regulation of transcription. Interacts with tRNA-Tyr. The polypeptide is DNA-binding protein SMUBP-2 (IGHMBP2) (Homo sapiens (Human)).